The chain runs to 606 residues: Aspartate--tRNA(Asp/Asn) ligase (606 aa).

Position 177 (Glu-177) interacts with L-aspartate. An aspartate region spans residues 201-204 (QLFK). Residue Arg-223 coordinates L-aspartate. ATP contacts are provided by residues 223 to 225 (RDE) and Gln-232. His-461 contributes to the L-aspartate binding site. Glu-499 serves as a coordination point for ATP. Arg-506 is a binding site for L-aspartate. Position 551-554 (551-554 (GLDR)) interacts with ATP.

It belongs to the class-II aminoacyl-tRNA synthetase family. Type 1 subfamily. Homodimer.

The protein resides in the cytoplasm. The enzyme catalyses tRNA(Asx) + L-aspartate + ATP = L-aspartyl-tRNA(Asx) + AMP + diphosphate. Its function is as follows. Aspartyl-tRNA synthetase with relaxed tRNA specificity since it is able to aspartylate not only its cognate tRNA(Asp) but also tRNA(Asn). Reaction proceeds in two steps: L-aspartate is first activated by ATP to form Asp-AMP and then transferred to the acceptor end of tRNA(Asp/Asn). This is Aspartate--tRNA(Asp/Asn) ligase from Prochlorococcus marinus (strain NATL2A).